We begin with the raw amino-acid sequence, 549 residues long: DNA ligase 1 (549 aa).

E212 is an ATP binding site. K214 serves as the catalytic N6-AMP-lysine intermediate. Residues R219, R234, E264, F310, R387, and K393 each coordinate ATP.

This sequence belongs to the ATP-dependent DNA ligase family. The cofactor is Mg(2+).

It carries out the reaction ATP + (deoxyribonucleotide)n-3'-hydroxyl + 5'-phospho-(deoxyribonucleotide)m = (deoxyribonucleotide)n+m + AMP + diphosphate.. DNA ligase that seals nicks in double-stranded DNA during DNA replication, DNA recombination and DNA repair. The sequence is that of DNA ligase 1 from Methanosarcina barkeri (strain Fusaro / DSM 804).